The primary structure comprises 762 residues: ABC-type oligopeptide transporter ABCB9 (762 aa).

The next 8 membrane-spanning stretches (helical) occupy residues 7–27 (VVVTLAFVSMDVGVTTAIYAF), 47–67 (VLDLWAACLYRSCLLLGATIG), 84–104 (LVITLVCLFVGIYAMAKLLLF), 116–136 (FWALFVWTYISLAASFLLWGL), 181–201 (VAFLVAASFFLIVAALGETFL), 221–241 (FTTAVVVVCLLAIGSSLAAGI), 315–335 (VFMFSLSWQLSLVTFMGFPII), and 412–432 (SGLTLLVVQVSILYYGGHLVI). Positions 184 to 467 (LVAASFFLIV…VGSVYSGLMQ (284 aa)) constitute an ABC transmembrane type-1 domain. Residues 500–736 (VDFENVTFTY…GGLYAKLVQR (237 aa)) form the ABC transporter domain. 535–542 (GPSGSGKS) contributes to the ATP binding site.

Belongs to the ABC transporter superfamily. ABCB family. MHC peptide exporter (TC 3.A.1.209) subfamily. In terms of assembly, homodimer. Interacts (via TMD0 region) with LAMP1; this interaction strongly stabilizes ABCB9 and protects ABCB9 against lysosomal degradation. Interacts (via TMD0 region) with LAMP2 (isoform LAMP-2B). Interacts (via TMD0) with YIF1B; this interaction allows (but is not essential) the ER-to-Golgi trafficking and strongly depends on a salt bridge within TMD0. In terms of tissue distribution, found in testis, particularly in the Sertoli cells of the seminiferous tubules. Also expressed in kidney, brain, heart, lung, spleen, thymus, intestine and testis. Higher expression detected in brain and testis than in thymus and intestine.

Its subcellular location is the lysosome membrane. The catalysed reaction is a [oligopeptide](in) + ATP + H2O = a [oligopeptide](out) + ADP + phosphate + H(+). ATP-dependent low-affinity peptide transporter which translocates a broad spectrum of peptides from the cytosol to the lysosomal lumen for degradation. Displays a broad peptide length specificity from 6-mer up to at least 59-mer peptides with an optimum of 23-mers. Binds and transports smaller and larger peptides with the same affinity. Favors positively charged, aromatic or hydrophobic residues in the N- and C-terminal positions whereas negatively charged residues as well as asparagine and methionine are not favored. The sequence is that of ABC-type oligopeptide transporter ABCB9 from Rattus norvegicus (Rat).